Here is a 123-residue protein sequence, read N- to C-terminus: Putative iron-sulfur cluster insertion protein ErpA (123 aa).

Positions 51, 115, and 117 each coordinate iron-sulfur cluster.

Belongs to the HesB/IscA family. Homodimer. Iron-sulfur cluster serves as cofactor.

Required for insertion of 4Fe-4S clusters. The chain is Putative iron-sulfur cluster insertion protein ErpA from Bordetella bronchiseptica (strain ATCC BAA-588 / NCTC 13252 / RB50) (Alcaligenes bronchisepticus).